The sequence spans 186 residues: Pyridoxal 5'-phosphate synthase subunit PdxT (186 aa).

47–49 (GES) contributes to the L-glutamine binding site. The active-site Nucleophile is the Cys76. Residues Arg102 and 130-131 (IR) contribute to the L-glutamine site. Residues His166 and Glu168 each act as charge relay system in the active site.

It belongs to the glutaminase PdxT/SNO family. In the presence of PdxS, forms a dodecamer of heterodimers. Only shows activity in the heterodimer.

The catalysed reaction is aldehydo-D-ribose 5-phosphate + D-glyceraldehyde 3-phosphate + L-glutamine = pyridoxal 5'-phosphate + L-glutamate + phosphate + 3 H2O + H(+). The enzyme catalyses L-glutamine + H2O = L-glutamate + NH4(+). It functions in the pathway cofactor biosynthesis; pyridoxal 5'-phosphate biosynthesis. In terms of biological role, catalyzes the hydrolysis of glutamine to glutamate and ammonia as part of the biosynthesis of pyridoxal 5'-phosphate. The resulting ammonia molecule is channeled to the active site of PdxS. The polypeptide is Pyridoxal 5'-phosphate synthase subunit PdxT (Staphylococcus epidermidis (strain ATCC 35984 / DSM 28319 / BCRC 17069 / CCUG 31568 / BM 3577 / RP62A)).